A 570-amino-acid chain; its full sequence is Methionine--tRNA ligase (570 aa).

The short motif at 14–24 is the 'HIGH' region element; it reads PYINGIKHLGN. Zn(2+) is bound by residues C146, C149, C159, and C162. A 'KMSKS' region motif is present at residues 347-351; that stretch reads QFSTS. Residue T350 participates in ATP binding.

This sequence belongs to the class-I aminoacyl-tRNA synthetase family. MetG type 1 subfamily. Monomer. Zn(2+) is required as a cofactor.

Its subcellular location is the cytoplasm. It catalyses the reaction tRNA(Met) + L-methionine + ATP = L-methionyl-tRNA(Met) + AMP + diphosphate. Is required not only for elongation of protein synthesis but also for the initiation of all mRNA translation through initiator tRNA(fMet) aminoacylation. The chain is Methionine--tRNA ligase from Jannaschia sp. (strain CCS1).